The chain runs to 549 residues: Probable protein kinase UbiB (549 aa).

In terms of domain architecture, Protein kinase spans D123–L504. ATP is bound by residues L129–V137 and K156. D291 (proton acceptor) is an active-site residue. Residues M505–V525 traverse the membrane as a helical segment.

This sequence belongs to the ABC1 family. UbiB subfamily.

It is found in the cell inner membrane. The protein operates within cofactor biosynthesis; ubiquinone biosynthesis [regulation]. Its function is as follows. Is probably a protein kinase regulator of UbiI activity which is involved in aerobic coenzyme Q (ubiquinone) biosynthesis. The protein is Probable protein kinase UbiB of Glaesserella parasuis serovar 5 (strain SH0165) (Haemophilus parasuis).